The sequence spans 549 residues: Probable amidase (549 aa).

Active-site charge relay system residues include K132 and S209. Residue S233 is the Acyl-ester intermediate of the active site.

This sequence belongs to the amidase family.

The enzyme catalyses a monocarboxylic acid amide + H2O = a monocarboxylate + NH4(+). In Saccharomyces cerevisiae (strain ATCC 204508 / S288c) (Baker's yeast), this protein is Probable amidase (AMD2).